The chain runs to 252 residues: NAP1-related protein 2 (252 aa).

A compositionally biased stretch (basic and acidic residues) spans 1 to 15; sequence MTAPADKGKKAKTDA. A disordered region spans residues 1 to 23; the sequence is MTAPADKGKKAKTDADGGAAEEN. Positions 26-67 form a coiled coil; sequence IDGALVLSIEKLQEIQDELEKVNEEASDKVLEVEQKYSEIRR. The interval 222–252 is disordered; it reads YFNNEAEELGEDDDEEGSDADEGEEDEEEEN. Over residues 226–252 the composition is skewed to acidic residues; sequence EAEELGEDDDEEGSDADEGEEDEEEEN.

This sequence belongs to the nucleosome assembly protein (NAP) family.

It is found in the nucleus. The protein localises to the cytoplasm. Its function is as follows. Acts as a histone H2A/H2B chaperone in nucleosome assembly. The polypeptide is NAP1-related protein 2 (Oryza sativa subsp. indica (Rice)).